Consider the following 575-residue polypeptide: Epsin-1 (575 aa).

Positions 8, 11, 25, 30, 63, and 73 each coordinate a 1,2-diacyl-sn-glycero-3-phospho-(1D-myo-inositol-4,5-bisphosphate). Residues 12-144 (NIVHNYSEAE…RDEDRLREER (133 aa)) form the ENTH domain. Positions 149-186 (KTKEKLAQTATASSAAVGSGPPPEAEQAWPQSSGEEEL) are disordered. The segment covering 157-167 (TATASSAAVGS) has biased composition (low complexity). 3 UIM domains span residues 183 to 202 (EEELQLQLALAMSKEEADQP), 208 to 227 (EDDVQLQLALSLSREEHDKE), and 233 to 252 (GDDLRLQMAIEESKRETGGK). Disordered stretches follow at residues 264-283 (FTTPAPPQASDPWGGPASVP) and 293-575 (SDPW…PFLL). Repeat copies occupy residues 274–276 (DPW), 294–296 (DPW), 306–308 (DPW), 319–321 (DPW), 332–334 (DPW), 349–351 (DPW), 367–369 (DPW), and 377–379 (DPW). The interval 274–379 (DPWGGPASVP…APAPAFSDPW (106 aa)) is 8 X 3 AA repeats of D-P-W. Over residues 306–316 (DPWGGAAPTPA) the composition is skewed to low complexity. The span at 333–346 (PWGGTPAPAAGEGP) shows a compositional bias: low complexity. Residues 367–379 (DPWAPAPAFSDPW) show a composition bias toward low complexity. Residue S382 is modified to Phosphoserine. Residues 401–410 (DEFSDFDRLR) carry the [DE]-X(1,2)-F-X-X-[FL]-X-X-X-R motif motif. Phosphoserine is present on residues S418 and S419. T420 carries the phosphothreonine modification. Residues S434, S446, and S453 each carry the phosphoserine modification. Pro residues predominate over residues 453-467 (SPPPAATPTPTPPTR). A phosphothreonine mark is found at T459, T463, and T469. S472 carries the post-translational modification Phosphoserine. Position 493 is a phosphothreonine (T493). Tandem repeats lie at residues 501–503 (NPF) and 517–519 (NPF). The 3 X 3 AA repeats of N-P-F stretch occupies residues 501–573 (NPFLPSGAPA…GPPAPNTNPF (73 aa)). The residue at position 533 (R533) is an Omega-N-methylarginine. Pro residues predominate over residues 556 to 569 (GLPPMMPPGPPAPN). Copy 3 of the repeat occupies 571–573 (NPF).

The protein belongs to the epsin family. As to quaternary structure, monomer. Binds ITSN1. Binds clathrin, ZBTB16/ZNF145, AP2A1 and AP2A2. Binds ubiquitinated proteins. Interacts with RALBP1 in a complex also containing NUMB and TFAP2A during interphase and mitosis. Interacts with AP2B1. Interacts with UBQLN2. Interacts with REPS2; the interaction is direct. Interacts with EPS15; the interaction is direct. Interacts with ENTREP1. Ubiquitinated. In terms of processing, phosphorylated on serine and/or threonine residues in mitotic cells. Phosphorylation reduces interaction with REPS2, AP-2 and the membrane fraction. Depolarization of synaptosomes results in dephosphorylation. As to expression, ubiquitously expressed. Detected in liver, spleen and testis, and weakly in lung and thymus (at protein level).

It is found in the cytoplasm. The protein resides in the cell membrane. It localises to the nucleus. Its subcellular location is the membrane. The protein localises to the clathrin-coated pit. Binds to membranes enriched in phosphatidylinositol 4,5-bisphosphate (PtdIns(4,5)P2). Modifies membrane curvature and facilitates the formation of clathrin-coated invaginations. Regulates receptor-mediated endocytosis. The protein is Epsin-1 (Epn1) of Rattus norvegicus (Rat).